The primary structure comprises 498 residues: uncharacterized protein (498 aa).

The next 11 membrane-spanning stretches (helical) occupy residues 54 to 74, 100 to 120, 128 to 148, 150 to 170, 188 to 208, 221 to 241, 302 to 322, 326 to 346, 353 to 373, 381 to 401, and 446 to 466; these read LLKM…MAFL, VAVS…VVLV, MLAF…FMSS, GGLI…FPAL, SYLF…AYAL, WIYI…LFAL, VLYG…FVGL, YMTI…AWLS, AVYL…MLAS, TATY…LGWL, and AFTL…FFSL.

Belongs to the major facilitator superfamily. Allantoate permease family.

Its subcellular location is the membrane. This is an uncharacterized protein from Schizosaccharomyces pombe (strain 972 / ATCC 24843) (Fission yeast).